The sequence spans 750 residues: Signal transducer and activator of transcription 1-alpha/beta (750 aa).

N-acetylserine is present on S2. K114, K175, K296, K366, K525, and K637 each carry N6-methyllysine. Residues L136–F317 are a coiled coil. The SH2 domain maps to W573–N670. An ADP-ribosyl glutamic acid; by PARP14 modification is found at E657. Position 665 is an N6-methyllysine (K665). Y701 is subject to Phosphotyrosine; by JAK1, JAK2 or TYK2. K703 is covalently cross-linked (Glycyl lysine isopeptide (Lys-Gly) (interchain with G-Cter in SUMO1); alternate). Residue K703 forms a Glycyl lysine isopeptide (Lys-Gly) (interchain with G-Cter in SUMO2); alternate linkage. E705 carries the ADP-ribosyl glutamic acid; by PARP14 modification. At S708 the chain carries Phosphoserine; by IKKE. The residue at position 727 (S727) is a Phosphoserine; by CAMK2 and MAPK14. S745 carries the post-translational modification Phosphoserine; by IKKE. T749 bears the Phosphothreonine; by IKKB mark.

Belongs to the transcription factor STAT family. As to quaternary structure, isoform alpha homodimerizes upon IFN-gamma induced phosphorylation. Heterodimer with STAT2 upon IFN-alpha/beta induced phosphorylation. The heterodimer STAT1:STAT2 forms the interferon-stimulated gene factor 3 complex (ISGF3) with IRF9. Interacts (phosphorylated at Ser-727) with PIAS1; the interaction results in release of STAT1 from its target gene. Interacts with IFNAR1; the interaction requires the phosphorylation of IFNAR1 at 'Tyr-466'. Interacts with IFNAR2. Found in a complex with NMI and CREBBP/CBP. Interacts with NMI which is required for CREBBP/CBP recruitment to the complex. Interacts with PTK2/FAK1. Interacts with SRC. Interacts with ERBB4 (phosphorylated). Interacts with PARP9 and DTX3L independently of IFN-beta or IFN-gamma-mediated STAT1 'Tyr-701' phosphorylation. Interacts with histone acetyltransferase EP300/p300 in response to INF-gamma stimulation. Independently of its phosphorylation status, interacts with OTOP1. Interacts with IFNGR1. Interacts with STAT4. In terms of assembly, (Microbial infection) Interacts with Sendai virus C', C, Y1 and Y2 proteins, preventing activation of ISRE and GAS promoter. (Microbial infection) Interacts with Nipah virus P, V and W proteins preventing activation of ISRE and GAS promoter. As to quaternary structure, (Microbial infection) Interacts with Rabies virus phosphoprotein preventing activation of ISRE and GAS promoter. In terms of assembly, (Microbial infection) Interacts with HCV core protein; the interaction results in STAT1 degradation. (Microbial infection) Interacts with ebolavirus protein VP24. As to quaternary structure, (Microbial infection) Interacts with Epstein-Barr virus (EBV) tegument protein BGLF2; this interaction leads to STAT1 dephosphorylation and inhibition. In terms of assembly, (Microbial infection) Interacts (via N-terminus) with measles V protein; this interaction inhibits STAT1 phosphorylation by Jak1 and thereby the type I interferon signaling pathway. Deubiquitinated by USP13; leading to STAT1 stabilization and positive regulation of type I and type II IFN signalings. In terms of processing, phosphorylated on tyrosine and serine residues in response to a variety of cytokines/growth hormones including IFN-alpha, IFN-gamma, PDGF and EGF. Activated KIT promotes phosphorylation on tyrosine residues and subsequent translocation to the nucleus. Upon EGF stimulation, phosphorylation on Tyr-701 (lacking in beta form) by JAK1, JAK2 or TYK2 promotes dimerization and subsequent translocation to the nucleus. Growth hormone (GH) activates STAT1 signaling only via JAK2. Tyrosine phosphorylated in response to constitutively activated FGFR1, FGFR2, FGFR3 and FGFR4. Phosphorylation on Ser-727 by several kinases including MAPK14, ERK1/2, CAMK2/CAMKII and CK2 in response to IFN-gamma stimulation, is required for maximal transcriptional activity. Phosphorylated on Ser-727 by CAMK2/CAMKII in response to IFN-gamma stimulation and calcium mobilization, promoting activity. Phosphorylated by CAMK2/CAMKII in response to IFN-beta stimulation and calcium mobilization in epithelial cells, promoting activity. Phosphorylation on Ser-727 promotes sumoylation though increasing interaction with PIAS. Phosphorylation on Ser-727 by PRKCD induces apoptosis in response to DNA-damaging agents. Phosphorylated on tyrosine residues when PTK2/FAK1 is activated; most likely this is catalyzed by a SRC family kinase. Dephosphorylation on tyrosine residues by PTPN2 negatively regulates interferon-mediated signaling. Upon viral infection or IFN induction, phosphorylation on Ser-708 occurs much later than phosphorylation on Tyr-701 and is required for the binding of ISGF3 on the ISREs of a subset of IFN-stimulated genes IKBKE-dependent. Phosphorylation at Tyr-701 and Ser-708 are mutually exclusive, phosphorylation at Ser-708 requires previous dephosphorylation of Tyr-701. Phosphorylation at Thr-749 by IKBKB/IKKB promotes transcriptional activation of ARID5A and IL12B by STAT1. Phosphorylation at Thr-749 restricts interferon signaling and anti-inflammatory responses and promotes innate inflammatory responses. Post-translationally, sumoylated with SUMO1, SUMO2 and SUMO3. Sumoylation is enhanced by IFN-gamma-induced phosphorylation on Ser-727, and by interaction with PIAS proteins. Enhances the transactivation activity. ISGylated. In terms of processing, mono-ADP-ribosylated at Glu-657 and Glu-705 by PARP14; ADP-ribosylation prevents phosphorylation at Tyr-701. However, the role of ADP-ribosylation in the prevention of phosphorylation has been called into question and the lack of phosphorylation may be due to sumoylation of Lys-703. Post-translationally, monomethylated at Lys-525 by SETD2; monomethylation is necessary for phosphorylation at Tyr-701, translocation into the nucleus and activation of the antiviral defense. (Microbial infection) Ubiquitinated by Herpes simplex virus 2 E3 ubiquitin ligase ICP22.

It is found in the cytoplasm. Its subcellular location is the nucleus. Signal transducer and transcription activator that mediates cellular responses to interferons (IFNs), cytokine KITLG/SCF and other cytokines and other growth factors. Following type I IFN (IFN-alpha and IFN-beta) binding to cell surface receptors, signaling via protein kinases leads to activation of Jak kinases (TYK2 and JAK1) and to tyrosine phosphorylation of STAT1 and STAT2. The phosphorylated STATs dimerize and associate with ISGF3G/IRF-9 to form a complex termed ISGF3 transcription factor, that enters the nucleus. ISGF3 binds to the IFN stimulated response element (ISRE) to activate the transcription of IFN-stimulated genes (ISG), which drive the cell in an antiviral state. In response to type II IFN (IFN-gamma), STAT1 is tyrosine- and serine-phosphorylated. It then forms a homodimer termed IFN-gamma-activated factor (GAF), migrates into the nucleus and binds to the IFN gamma activated sequence (GAS) to drive the expression of the target genes, inducing a cellular antiviral state. Becomes activated in response to KITLG/SCF and KIT signaling. May mediate cellular responses to activated FGFR1, FGFR2, FGFR3 and FGFR4. Following bacterial lipopolysaccharide (LPS)-induced TLR4 endocytosis, phosphorylated at Thr-749 by IKBKB which promotes binding of STAT1 to the 5'-TTTGAGGC-3' sequence in the ARID5A promoter, resulting in transcriptional activation of ARID5A and subsequent ARID5A-mediated stabilization of IL6. Phosphorylation at Thr-749 also promotes binding of STAT1 to the 5'-TTTGAGTC-3' sequence in the IL12B promoter and activation of IL12B transcription. Involved in food tolerance in small intestine: associates with the Gasdermin-D, p13 cleavage product (13 kDa GSDMD) and promotes transcription of CIITA, inducing type 1 regulatory T (Tr1) cells in upper small intestine. The chain is Signal transducer and activator of transcription 1-alpha/beta (STAT1) from Homo sapiens (Human).